The primary structure comprises 73 residues: Beta-defensin 40 (73 aa).

The first 23 residues, 1 to 23 (MKISCFLLMIFFLSCFQINPVAV), serve as a signal peptide directing secretion. Cystine bridges form between cysteine 29–cysteine 58, cysteine 36–cysteine 51, and cysteine 41–cysteine 59.

Belongs to the beta-defensin family. Only expressed in epididymis (corpus, cauda and caput).

It localises to the secreted. In terms of biological role, has antibacterial activity. This Mus musculus (Mouse) protein is Beta-defensin 40 (Defb40).